A 329-amino-acid chain; its full sequence is Endonuclease 8-like 2 (329 aa).

Pro2 functions as the Schiff-base intermediate with DNA in the catalytic mechanism. Glu3 functions as the Proton donor in the catalytic mechanism. Catalysis depends on Lys50, which acts as the Proton donor; for beta-elimination activity. At Lys50 the chain carries N6-acetyllysine. Phosphoserine is present on Ser68. The disordered stretch occupies residues 88–112 (GPSAQEPSAGPSGSGEPVPSRSAET). Lys150 bears the N6-acetyllysine mark. A DNA-binding site is contributed by Asn227. The segment at 280–316 (QIYQKEQCPSGHQVMKETFGPPDGLQRLTWWCPQCQP) adopts an FPG-type zinc-finger fold. Arg306 acts as the Proton donor; for delta-elimination activity in catalysis.

It belongs to the FPG family. In terms of assembly, binds EP300.

It is found in the nucleus. The catalysed reaction is 2'-deoxyribonucleotide-(2'-deoxyribose 5'-phosphate)-2'-deoxyribonucleotide-DNA = a 3'-end 2'-deoxyribonucleotide-(2,3-dehydro-2,3-deoxyribose 5'-phosphate)-DNA + a 5'-end 5'-phospho-2'-deoxyribonucleoside-DNA + H(+). Acetylation of Lys-50 leads to loss of DNA nicking activity. Its function is as follows. Involved in base excision repair of DNA damaged by oxidation or by mutagenic agents. Has DNA glycosylase activity towards 5-hydroxyuracil and other oxidized derivatives of cytosine with a preference for mismatched double-stranded DNA (DNA bubbles). Has low or no DNA glycosylase activity towards thymine glycol, 2-hydroxyadenine, hypoxanthine and 8-oxoguanine. Has AP (apurinic/apyrimidinic) lyase activity and introduces nicks in the DNA strand. Cleaves the DNA backbone by beta-delta elimination to generate a single-strand break at the site of the removed base with both 3'- and 5'-phosphates. This chain is Endonuclease 8-like 2 (Neil2), found in Mus musculus (Mouse).